The following is a 158-amino-acid chain: Transcriptional regulator MraZ (158 aa).

2 SpoVT-AbrB domains span residues 7 to 57 and 86 to 129; these read THQN…PTAA and AYPV…EPAA. The interval 133–158 is disordered; sequence RRAEARTRSRQLALPAQGRRQGGADA.

This sequence belongs to the MraZ family. As to quaternary structure, forms oligomers.

It localises to the cytoplasm. The protein localises to the nucleoid. The chain is Transcriptional regulator MraZ from Gluconacetobacter diazotrophicus (strain ATCC 49037 / DSM 5601 / CCUG 37298 / CIP 103539 / LMG 7603 / PAl5).